The sequence spans 655 residues: A-type voltage-gated potassium channel KCND3 (655 aa).

At 1-182 (MAAGVAAWLP…FENPHTSTLA (182 aa)) the chain is on the cytoplasmic side. Interaction with KCNIP1 stretches follow at residues 6-21 (AAWL…GWMP) and 70-78 (EKEFFFNED). Residues His-104, Cys-110, Cys-131, and Cys-132 each coordinate Zn(2+). Ser-153 carries the phosphoserine modification. The chain crosses the membrane as a helical span at residues 183–204 (LVFYYVTGFFIAVSVITNVVET). Residues 205-223 (VPCGTVPGSKELPCGERYS) lie on the Extracellular side of the membrane. Residues 224–246 (VAFFCLDTACVMIFTVEYLLRLF) traverse the membrane as a helical segment. At 247 to 253 (AAPSRYR) the chain is on the cytoplasmic side. Residues 254–277 (FIRSVMSIIDVVAIMPYYIGLVMT) traverse the membrane as a helical segment. Residues 278–283 (NNEDVS) lie on the Extracellular side of the membrane. The chain crosses the membrane as a helical; Voltage-sensor span at residues 284-306 (GAFVTLRVFRVFRIFKFSRHSQG). The Cytoplasmic portion of the chain corresponds to 307–318 (LRILGYTLKSCA). The chain crosses the membrane as a helical span at residues 319 to 343 (SELGFLLFSLTMAIIIFATVMFYAE). Residues 344–352 (KGSSASKFT) are Extracellular-facing. An intramembrane region (helical) is located at residues 353-366 (SIPASFWYTIVTMT). 4 residues coordinate K(+): Thr-367, Leu-368, Gly-369, and Tyr-370. Residues 367-372 (TLGYGD) carry the Selectivity filter motif. The stretch at 367 to 374 (TLGYGDMV) is an intramembrane region. The chain crosses the membrane as a helical span at residues 378 to 400 (IAGKIFGSICSLSGVLVIALPVP). The Cytoplasmic segment spans residues 401–655 (VIVSNFSRIY…TSNVVKVSVL (255 aa)). At Thr-459 the chain carries Phosphothreonine. Residues 470-487 (SLIESQHHHLLHCLEKTT) form an interaction with KCNIP1 and KCNIP2 region. The mediates dendritic targeting stretch occupies residues 474–489 (SQHHHLLHCLEKTTGL). The disordered stretch occupies residues 523–565 (SSMQNYPSTRSPSLSSHSGLTTTCCSRRSKKTTHLPNSNLPAT). Positions 529-548 (PSTRSPSLSSHSGLTTTCCS) are enriched in low complexity. Ser-569 carries the post-translational modification Phosphoserine; by CaMK2D. Position 585 is a phosphoserine (Ser-585). A disordered region spans residues 616-647 (SIPTPPALTPEGESRPPPASPGPNTNIPSITS). Residues 637-647 (GPNTNIPSITS) show a composition bias toward polar residues.

The protein belongs to the potassium channel family. D (Shal) (TC 1.A.1.2) subfamily. Kv4.3/KCND3 sub-subfamily. In terms of assembly, homotetramer. Heterotetramer with KCND2. Associates with the regulatory subunits KCNIP3 and KCNIP4. Interacts with KCNE1, KCNE2, SCN1B and KCNAB1 and DLG1. Component of heteromultimeric potassium channels. Identified in potassium channel complexes containing KCND1, KCND2, KCND3, KCNIP1, KCNIP2, KCNIP3, KCNIP4, DPP6 and DPP10. Interacts with KCNIP1; each KCNIP1 monomer interacts with two adjacent KCND3 subunits, through both the N-terminal inactivation ball of a KCND3 subunit and a C-terminal helix from the adjacent KCND3 subunit, clamping them together; this interaction stabilizes the tetrameric form and modulates the channel gating kinetics namely channel activation and inactivation kinetics and rate of recovery from inactivation. Interacts with DPP6; this interaction modulates the channel gating kinetics namely channel activation and inactivation kinetics and rate of recovery from inactivation. Interacts with KCNIP2; each KCNIP2 monomer interacts with two adjacent KCND3 subunits, through both the N-terminal inactivation ball of a KCND3 subunit and a C-terminal helix from the adjacent KCND3 subunit, clamping them together; this interaction modulates the channel gating kinetics. Post-translationally, regulated through phosphorylation at Ser-569 by CaMK2D. As to expression, highly expressed in brain, in particular in the retrosplenial cortex, medial habenula, anterior thalamus, hippocampus, cerebellum and lateral geniculate and superior colliculus. Highly expressed in heart atrium (at protein level) and throughout the ventricle wall, in lung and vas deferens.

It localises to the cell membrane. The protein resides in the sarcolemma. Its subcellular location is the cell projection. The protein localises to the dendrite. It carries out the reaction K(+)(in) = K(+)(out). In terms of biological role, pore-forming (alpha) subunit of voltage-gated A-type potassium channels that mediates transmembrane potassium transport in excitable membranes, in brain and heart. In cardiomyocytes, may generate the transient outward potassium current I(To). In neurons, may conduct the transient subthreshold somatodendritic A-type potassium current (ISA). Kinetics properties are characterized by fast activation at subthreshold membrane potentials, rapid inactivation, and quick recovery from inactivation. Channel properties are modulated by interactions with regulatory subunits. Interaction with the regulatory subunits KCNIP1 or KCNIP2 modulates the channel gating kinetics namely channel activation and inactivation kinetics and rate of recovery from inactivation. Likewise, interaction with DPP6 modulates the channel gating kinetics namely channel activation and inactivation kinetics. The sequence is that of A-type voltage-gated potassium channel KCND3 from Rattus norvegicus (Rat).